We begin with the raw amino-acid sequence, 245 residues long: Rhamnosyl O-methyltransferase (245 aa).

The first 38 residues, M1 to A38, serve as a signal peptide directing secretion.

Belongs to the rhamnosyl O-methyltransferase family.

Catalyzes the O-methylation of the hydroxyl group located on C-2 of the first rhamnosyl residue linked to the phenolic group of glycosylated phenolphthiocerol dimycocerosates (PGL) and p-hydroxybenzoic acid derivatives (p-HBAD). This chain is Rhamnosyl O-methyltransferase, found in Mycobacterium bovis (strain ATCC BAA-935 / AF2122/97).